The following is a 144-amino-acid chain: Deoxyuridine 5'-triphosphate nucleotidohydrolase (144 aa).

Substrate is bound by residues 63–65, Asn-76, and 80–82; these read RSG and TID.

This sequence belongs to the dUTPase family. Requires Mg(2+) as cofactor.

The enzyme catalyses dUTP + H2O = dUMP + diphosphate + H(+). It participates in pyrimidine metabolism; dUMP biosynthesis; dUMP from dCTP (dUTP route): step 2/2. Functionally, this enzyme is involved in nucleotide metabolism: it produces dUMP, the immediate precursor of thymidine nucleotides and it decreases the intracellular concentration of dUTP so that uracil cannot be incorporated into DNA. The chain is Deoxyuridine 5'-triphosphate nucleotidohydrolase from Bacteroides fragilis (strain YCH46).